Consider the following 310-residue polypeptide: p-hydroxybenzoic acid efflux pump subunit AaeA (310 aa).

The helical transmembrane segment at 12–32 threads the bilayer; it reads AITVVLVILAFIAIFNAWVYY.

Belongs to the membrane fusion protein (MFP) (TC 8.A.1) family.

It localises to the cell inner membrane. Its function is as follows. Forms an efflux pump with AaeB. The sequence is that of p-hydroxybenzoic acid efflux pump subunit AaeA from Escherichia coli O139:H28 (strain E24377A / ETEC).